Consider the following 593-residue polypeptide: Arginine--tRNA ligase (593 aa).

The short motif at 138–148 (ANPTGPLHVGH) is the 'HIGH' region element.

Belongs to the class-I aminoacyl-tRNA synthetase family. As to quaternary structure, monomer.

The protein resides in the cytoplasm. It carries out the reaction tRNA(Arg) + L-arginine + ATP = L-arginyl-tRNA(Arg) + AMP + diphosphate. The polypeptide is Arginine--tRNA ligase (Burkholderia vietnamiensis (strain G4 / LMG 22486) (Burkholderia cepacia (strain R1808))).